Consider the following 152-residue polypeptide: MLP-like protein 165 (152 aa).

Belongs to the MLP family.

This is MLP-like protein 165 (MLP165) from Arabidopsis thaliana (Mouse-ear cress).